Reading from the N-terminus, the 336-residue chain is USG-1 protein homolog (336 aa).

It belongs to the aspartate-semialdehyde dehydrogenase family.

This is USG-1 protein homolog (usg) from Pseudomonas aeruginosa (strain ATCC 15692 / DSM 22644 / CIP 104116 / JCM 14847 / LMG 12228 / 1C / PRS 101 / PAO1).